The following is a 138-amino-acid chain: Nucleoside diphosphate kinase (138 aa).

Positions 9, 57, 85, 91, 102, and 112 each coordinate ATP. Residue H120 is the Pros-phosphohistidine intermediate of the active site.

It belongs to the NDK family. Homotetramer. Requires Mg(2+) as cofactor.

The protein resides in the cytoplasm. It catalyses the reaction a 2'-deoxyribonucleoside 5'-diphosphate + ATP = a 2'-deoxyribonucleoside 5'-triphosphate + ADP. It carries out the reaction a ribonucleoside 5'-diphosphate + ATP = a ribonucleoside 5'-triphosphate + ADP. Its function is as follows. Major role in the synthesis of nucleoside triphosphates other than ATP. The ATP gamma phosphate is transferred to the NDP beta phosphate via a ping-pong mechanism, using a phosphorylated active-site intermediate. This chain is Nucleoside diphosphate kinase, found in Streptococcus agalactiae serotype III (strain NEM316).